The chain runs to 246 residues: Pyridoxine 5'-phosphate synthase (246 aa).

3-amino-2-oxopropyl phosphate is bound at residue N12. 14 to 15 contributes to the 1-deoxy-D-xylulose 5-phosphate binding site; that stretch reads DH. R23 is a 3-amino-2-oxopropyl phosphate binding site. The active-site Proton acceptor is the H48. 2 residues coordinate 1-deoxy-D-xylulose 5-phosphate: R50 and H55. E75 functions as the Proton acceptor in the catalytic mechanism. Position 105 (T105) interacts with 1-deoxy-D-xylulose 5-phosphate. The active-site Proton donor is the H196. Residues G197 and 218-219 each bind 3-amino-2-oxopropyl phosphate; that span reads GH.

This sequence belongs to the PNP synthase family. Homooctamer; tetramer of dimers.

The protein localises to the cytoplasm. The catalysed reaction is 3-amino-2-oxopropyl phosphate + 1-deoxy-D-xylulose 5-phosphate = pyridoxine 5'-phosphate + phosphate + 2 H2O + H(+). It functions in the pathway cofactor biosynthesis; pyridoxine 5'-phosphate biosynthesis; pyridoxine 5'-phosphate from D-erythrose 4-phosphate: step 5/5. Its function is as follows. Catalyzes the complicated ring closure reaction between the two acyclic compounds 1-deoxy-D-xylulose-5-phosphate (DXP) and 3-amino-2-oxopropyl phosphate (1-amino-acetone-3-phosphate or AAP) to form pyridoxine 5'-phosphate (PNP) and inorganic phosphate. This is Pyridoxine 5'-phosphate synthase from Pseudomonas syringae pv. syringae (strain B728a).